A 45-amino-acid polypeptide reads, in one-letter code: Cytochrome b559 subunit beta (45 aa).

The chain crosses the membrane as a helical span at residues 20–36 (WLAVHTLAVPTVFFLGA). Histidine 24 serves as a coordination point for heme.

It belongs to the PsbE/PsbF family. As to quaternary structure, heterodimer of an alpha subunit and a beta subunit. PSII is composed of 1 copy each of membrane proteins PsbA, PsbB, PsbC, PsbD, PsbE, PsbF, PsbH, PsbI, PsbJ, PsbK, PsbL, PsbM, PsbT, PsbX, PsbY, PsbZ, Psb30/Ycf12, peripheral proteins PsbO, CyanoQ (PsbQ), PsbU, PsbV and a large number of cofactors. It forms dimeric complexes. It depends on heme b as a cofactor.

Its subcellular location is the cellular thylakoid membrane. Its function is as follows. This b-type cytochrome is tightly associated with the reaction center of photosystem II (PSII). PSII is a light-driven water:plastoquinone oxidoreductase that uses light energy to abstract electrons from H(2)O, generating O(2) and a proton gradient subsequently used for ATP formation. It consists of a core antenna complex that captures photons, and an electron transfer chain that converts photonic excitation into a charge separation. This is Cytochrome b559 subunit beta from Trichormus variabilis (strain ATCC 29413 / PCC 7937) (Anabaena variabilis).